Reading from the N-terminus, the 794-residue chain is Protein SEY1 (794 aa).

Residues 1–687 (MMEVIDSVLG…KRSIIKTTTA (687 aa)) are Cytoplasmic-facing. The GB1/RHD3-type G domain occupies 43 to 272 (GLDYHVISVF…ANPYYFKPQY (230 aa)). 53 to 60 (GSQSSGKS) is a GTP binding site. Residues 331–352 (VDHILDDREKLGEVLKNLKQEC) adopt a coiled-coil conformation. Residues 688–708 (IPIWMYLLVVALGWNEFVMVL) form a helical membrane-spanning segment. Topologically, residues 709-711 (RNP) are lumenal. The helical transmembrane segment at 712–732 (LLVTLVLLFGVGFIFVNKFGL) threads the bilayer. Over 733 to 794 (WGPVLNVAHN…SDNEKIEKSE (62 aa)) the chain is Cytoplasmic. A disordered region spans residues 770 to 794 (NSAGKESYEMKDMSDSDNEKIEKSE). The segment covering 775–794 (ESYEMKDMSDSDNEKIEKSE) has biased composition (basic and acidic residues).

This sequence belongs to the TRAFAC class dynamin-like GTPase superfamily. GB1/RHD3 GTPase family. RHD3 subfamily.

The protein resides in the endoplasmic reticulum membrane. In terms of biological role, cooperates with the reticulon proteins and tubule-shaping DP1 family proteins to generate and maintain the structure of the tubular endoplasmic reticulum network. Has GTPase activity, which is required for its function in ER organization. In Zygosaccharomyces rouxii (strain ATCC 2623 / CBS 732 / NBRC 1130 / NCYC 568 / NRRL Y-229), this protein is Protein SEY1.